A 607-amino-acid chain; its full sequence is Arginine--tRNA ligase (607 aa).

A 'HIGH' region motif is present at residues 147–157 (PNIAKEMHVGH).

Belongs to the class-I aminoacyl-tRNA synthetase family. As to quaternary structure, monomer.

It is found in the cytoplasm. It carries out the reaction tRNA(Arg) + L-arginine + ATP = L-arginyl-tRNA(Arg) + AMP + diphosphate. In Prochlorococcus marinus (strain NATL1A), this protein is Arginine--tRNA ligase.